The chain runs to 122 residues: Large ribosomal subunit protein uL14 (122 aa).

Belongs to the universal ribosomal protein uL14 family. As to quaternary structure, part of the 50S ribosomal subunit. Forms a cluster with proteins L3 and L19. In the 70S ribosome, L14 and L19 interact and together make contacts with the 16S rRNA in bridges B5 and B8.

Its function is as follows. Binds to 23S rRNA. Forms part of two intersubunit bridges in the 70S ribosome. In Micrococcus luteus (strain ATCC 4698 / DSM 20030 / JCM 1464 / CCM 169 / CCUG 5858 / IAM 1056 / NBRC 3333 / NCIMB 9278 / NCTC 2665 / VKM Ac-2230) (Micrococcus lysodeikticus), this protein is Large ribosomal subunit protein uL14.